A 201-amino-acid polypeptide reads, in one-letter code: Ribonuclease HII (201 aa).

An RNase H type-2 domain is found at 10–200; sequence LIEAGCDEAG…LGTDPQLEIP (191 aa). Residues Asp-16, Glu-17, and Asp-108 each contribute to the a divalent metal cation site.

The protein belongs to the RNase HII family. It depends on Mn(2+) as a cofactor. Mg(2+) serves as cofactor.

It is found in the cytoplasm. The catalysed reaction is Endonucleolytic cleavage to 5'-phosphomonoester.. Endonuclease that specifically degrades the RNA of RNA-DNA hybrids. This chain is Ribonuclease HII, found in Phocaeicola vulgatus (strain ATCC 8482 / DSM 1447 / JCM 5826 / CCUG 4940 / NBRC 14291 / NCTC 11154) (Bacteroides vulgatus).